Consider the following 147-residue polypeptide: NADH-ubiquinone oxidoreductase chain 3 (147 aa).

A run of 3 helical transmembrane segments spans residues 6 to 26 (LFILFVSIIALLFLLINLVFA), 60 to 80 (AICFVILDLEIFTMFPYVGSL), and 84 to 104 (TFYSLVVILGFMFVVSAGFVF).

It belongs to the complex I subunit 3 family.

The protein resides in the mitochondrion membrane. The catalysed reaction is a ubiquinone + NADH + 5 H(+)(in) = a ubiquinol + NAD(+) + 4 H(+)(out). Functionally, core subunit of the mitochondrial membrane respiratory chain NADH dehydrogenase (Complex I) that is believed to belong to the minimal assembly required for catalysis. Complex I functions in the transfer of electrons from NADH to the respiratory chain. The immediate electron acceptor for the enzyme is believed to be ubiquinone. The protein is NADH-ubiquinone oxidoreductase chain 3 (ndh-3) of Neurospora crassa (strain ATCC 24698 / 74-OR23-1A / CBS 708.71 / DSM 1257 / FGSC 987).